The sequence spans 294 residues: UDP-3-O-acyl-N-acetylglucosamine deacetylase (294 aa).

3 residues coordinate Zn(2+): His-75, His-232, and Asp-236. Catalysis depends on His-259, which acts as the Proton donor.

This sequence belongs to the LpxC family. Zn(2+) serves as cofactor.

The catalysed reaction is a UDP-3-O-[(3R)-3-hydroxyacyl]-N-acetyl-alpha-D-glucosamine + H2O = a UDP-3-O-[(3R)-3-hydroxyacyl]-alpha-D-glucosamine + acetate. It participates in glycolipid biosynthesis; lipid IV(A) biosynthesis; lipid IV(A) from (3R)-3-hydroxytetradecanoyl-[acyl-carrier-protein] and UDP-N-acetyl-alpha-D-glucosamine: step 2/6. In terms of biological role, catalyzes the hydrolysis of UDP-3-O-myristoyl-N-acetylglucosamine to form UDP-3-O-myristoylglucosamine and acetate, the committed step in lipid A biosynthesis. In Campylobacter jejuni subsp. doylei (strain ATCC BAA-1458 / RM4099 / 269.97), this protein is UDP-3-O-acyl-N-acetylglucosamine deacetylase.